Consider the following 339-residue polypeptide: Glycerol-3-phosphate dehydrogenase [NAD(P)+] (339 aa).

Residues Ser-15, Trp-16, His-36, and Lys-110 each contribute to the NADPH site. Residues Lys-110, Gly-144, and Ser-146 each coordinate sn-glycerol 3-phosphate. An NADPH-binding site is contributed by Ala-148. Positions 199, 252, 262, 263, and 264 each coordinate sn-glycerol 3-phosphate. Lys-199 acts as the Proton acceptor in catalysis. Arg-263 contributes to the NADPH binding site. Positions 287 and 289 each coordinate NADPH.

The protein belongs to the NAD-dependent glycerol-3-phosphate dehydrogenase family.

It is found in the cytoplasm. It carries out the reaction sn-glycerol 3-phosphate + NAD(+) = dihydroxyacetone phosphate + NADH + H(+). The enzyme catalyses sn-glycerol 3-phosphate + NADP(+) = dihydroxyacetone phosphate + NADPH + H(+). It participates in membrane lipid metabolism; glycerophospholipid metabolism. Its function is as follows. Catalyzes the reduction of the glycolytic intermediate dihydroxyacetone phosphate (DHAP) to sn-glycerol 3-phosphate (G3P), the key precursor for phospholipid synthesis. The sequence is that of Glycerol-3-phosphate dehydrogenase [NAD(P)+] from Desulfotalea psychrophila (strain LSv54 / DSM 12343).